The sequence spans 505 residues: Phosphoglycerate kinase, glycosomal (505 aa).

Residues V29, D30, F31, N32, R45, S67, H68, G70, R71, L219, R220, H256, and R257 each coordinate (2R)-3-phosphoglycerate. Positions 302 and 303 each coordinate ADP. G302 provides a ligand contact to CDP. Residues A303 and K304 each contribute to the AMP site. A303 lines the ATP pocket. A303 contacts Mg(2+). Residue K304 coordinates (2R)-3-phosphoglycerate. D307 provides a ligand contact to CDP. A Mg(2+)-binding site is contributed by D307. ADP-binding residues include K308 and G326. K308 contributes to the AMP binding site. K308 lines the ATP pocket. G326 serves as a coordination point for CDP. Positions 327 and 399 each coordinate AMP. The ATP site is built by G327 and G399. G399 and N423 together coordinate ADP. The CDP site is built by G424, L426, and F429. 4 residues coordinate ADP: F429, E430, D462, and T463. Residue E430 coordinates AMP. ATP-binding residues include E430, D462, and T463. Residue D462 coordinates Mg(2+).

The protein belongs to the phosphoglycerate kinase family. In terms of assembly, monomer. The cofactor is Mg(2+).

The protein localises to the glycosome. It carries out the reaction (2R)-3-phosphoglycerate + ATP = (2R)-3-phospho-glyceroyl phosphate + ADP. The protein operates within carbohydrate degradation; glycolysis; pyruvate from D-glyceraldehyde 3-phosphate: step 2/5. The sequence is that of Phosphoglycerate kinase, glycosomal (PGKA) from Crithidia fasciculata.